The primary structure comprises 79 residues: Sec-independent protein translocase protein TatA (79 aa).

The helical transmembrane segment at 1–21 (MHMPSGTQWLIILLIVVLLFG) threads the bilayer.

This sequence belongs to the TatA/E family. As to quaternary structure, the Tat system comprises two distinct complexes: a TatABC complex, containing multiple copies of TatA, TatB and TatC subunits, and a separate TatA complex, containing only TatA subunits. Substrates initially bind to the TatABC complex, which probably triggers association of the separate TatA complex to form the active translocon.

Its subcellular location is the cell inner membrane. Its function is as follows. Part of the twin-arginine translocation (Tat) system that transports large folded proteins containing a characteristic twin-arginine motif in their signal peptide across membranes. TatA could form the protein-conducting channel of the Tat system. The protein is Sec-independent protein translocase protein TatA of Campylobacter lari (strain RM2100 / D67 / ATCC BAA-1060).